The chain runs to 185 residues: Elongation factor P 1 (185 aa).

This sequence belongs to the elongation factor P family.

Its subcellular location is the cytoplasm. The protein operates within protein biosynthesis; polypeptide chain elongation. Involved in peptide bond synthesis. Stimulates efficient translation and peptide-bond synthesis on native or reconstituted 70S ribosomes in vitro. Probably functions indirectly by altering the affinity of the ribosome for aminoacyl-tRNA, thus increasing their reactivity as acceptors for peptidyl transferase. In Chlamydia muridarum (strain MoPn / Nigg), this protein is Elongation factor P 1 (efp1).